We begin with the raw amino-acid sequence, 319 residues long: NADH-ubiquinone oxidoreductase chain 1 (319 aa).

Helical transmembrane passes span 3-23, 74-94, 106-126, 149-169, 175-195, 226-246, 254-274, and 294-314; these read LITL…AMAF, LFLL…IPLP, ILFI…SGWA, TLGL…LTTF, AVWL…STLA, LFFL…TILF, LTIN…FLWV, and FLPL…SMAG.

The protein belongs to the complex I subunit 1 family.

The protein localises to the mitochondrion inner membrane. The catalysed reaction is a ubiquinone + NADH + 5 H(+)(in) = a ubiquinol + NAD(+) + 4 H(+)(out). In terms of biological role, core subunit of the mitochondrial membrane respiratory chain NADH dehydrogenase (Complex I) that is believed to belong to the minimal assembly required for catalysis. Complex I functions in the transfer of electrons from NADH to the respiratory chain. The immediate electron acceptor for the enzyme is believed to be ubiquinone. In Polypterus ornatipinnis (Ornate bichir), this protein is NADH-ubiquinone oxidoreductase chain 1 (MT-ND1).